The chain runs to 60 residues: MLSMQLVTVTVQGAMVADIAVAVRTAPHPFLYASVLQDSPQARKPVRETRYQKMSAFLCT.

This is an uncharacterized protein from Treponema pallidum (strain Nichols).